The primary structure comprises 270 residues: Phosphate import ATP-binding protein PstB 1 (270 aa).

An ABC transporter domain is found at 24–265 (LAVERLNLFY…PYQRQTEDYI (242 aa)). An ATP-binding site is contributed by 56–63 (GPSGCGKS).

It belongs to the ABC transporter superfamily. Phosphate importer (TC 3.A.1.7) family. The complex is composed of two ATP-binding proteins (PstB), two transmembrane proteins (PstC and PstA) and a solute-binding protein (PstS).

It is found in the cell inner membrane. It catalyses the reaction phosphate(out) + ATP + H2O = ADP + 2 phosphate(in) + H(+). Part of the ABC transporter complex PstSACB involved in phosphate import. Responsible for energy coupling to the transport system. The polypeptide is Phosphate import ATP-binding protein PstB 1 (Yersinia pestis bv. Antiqua (strain Antiqua)).